We begin with the raw amino-acid sequence, 691 residues long: Elongation factor G (691 aa).

In terms of domain architecture, tr-type G spans 8–283 (EDYRNFGIMA…AVVDYLPSPV (276 aa)). Residues 17–24 (AHIDAGKT), 81–85 (DTPGH), and 135–138 (NKMD) contribute to the GTP site.

The protein belongs to the TRAFAC class translation factor GTPase superfamily. Classic translation factor GTPase family. EF-G/EF-2 subfamily.

The protein resides in the cytoplasm. Functionally, catalyzes the GTP-dependent ribosomal translocation step during translation elongation. During this step, the ribosome changes from the pre-translocational (PRE) to the post-translocational (POST) state as the newly formed A-site-bound peptidyl-tRNA and P-site-bound deacylated tRNA move to the P and E sites, respectively. Catalyzes the coordinated movement of the two tRNA molecules, the mRNA and conformational changes in the ribosome. In Methylorubrum populi (strain ATCC BAA-705 / NCIMB 13946 / BJ001) (Methylobacterium populi), this protein is Elongation factor G.